The sequence spans 371 residues: Sensor histidine kinase YvfT (371 aa).

Over 1 to 10 (MKKAISIFPK) the chain is Extracellular. The helical transmembrane segment at 11–31 (EFGFFPYIFLVYTIMPFLSLL) threads the bilayer. Topologically, residues 32–38 (KESGVKQ) are cytoplasmic. The helical transmembrane segment at 39–59 (GIGYGMLLLFVAAYRQLFCSV) threads the bilayer. Over 60 to 71 (GKASFTYWLIVQ) the chain is Extracellular. A helical transmembrane segment spans residues 72–92 (MAVILMYSVFYNITYIYLGFF). The Cytoplasmic portion of the chain corresponds to 93–109 (PANFVGYYKEKTNFNRA). The chain crosses the membrane as a helical span at residues 110–130 (FCALIFILLFPCLYQFIANSV). Over 131–135 (SLREL) the chain is Extracellular. Residues 136 to 156 (FSVLPFLVIMLISPFGIRSMF) form a helical membrane-spanning segment. Residues 157–371 (RRIELEAKLA…LTIPLIKKAE (215 aa)) are Cytoplasmic-facing. Residues 187–368 (DLHDTLGHTL…VVALTIPLIK (182 aa)) enclose the Histidine kinase domain. His-189 carries the phosphohistidine; by autocatalysis modification.

The protein localises to the cell membrane. It carries out the reaction ATP + protein L-histidine = ADP + protein N-phospho-L-histidine.. In terms of biological role, member of the two-component regulatory system YvfT/YvfU. Probably activates YvfU by phosphorylation. This chain is Sensor histidine kinase YvfT (yvfT), found in Bacillus subtilis (strain 168).